A 140-amino-acid polypeptide reads, in one-letter code: Methylglyoxal synthase (140 aa).

The region spanning 1 to 140 (MKIALIAHDR…HEGDRRPLAF (140 aa)) is the MGS-like domain. Substrate-binding positions include H8, K12, 34–37 (TGTT), and 54–55 (SG). The Proton donor/acceptor role is filled by D60. H87 serves as a coordination point for substrate.

Belongs to the methylglyoxal synthase family.

The catalysed reaction is dihydroxyacetone phosphate = methylglyoxal + phosphate. Catalyzes the formation of methylglyoxal from dihydroxyacetone phosphate. The protein is Methylglyoxal synthase of Enterococcus faecalis (strain ATCC 700802 / V583).